The following is a 373-amino-acid chain: MTDNSKTRVVVGMSGGVDSSVTALLLKEQGYDVIGVFMKNWDDTDEFGVCTATEDYKDVAAVADQIDIPYYSVNFEKEYWDRVFEYFLAEYRAGRTPNPDVMCNKEIKFKAFLDYAMTLGADYVATGHYAQVVRDEDGIVHMLRGADNNKDQTYFLSQLSQEQLQKAMFPLGHLQKSEVREIAERAGLATAKKKDSTGICFIGEKNFKEFLSQYLPAQKGRMMTVDGRDMGEHNGLMYYTIGQRGGMGIGGQKGGDNAPWFVVGKDLSKNILYVGQGFHHESLMSTSLDASTIHFTRDMPEEFEMECTAKFRYRQPDSKVTVKVKGDKSEVIFAEPQRAITPGQAVVFYDGQECLGGGIIDQAYKDGKVCQYI.

ATP-binding positions include 12 to 19 (GMSGGVDS) and M38. The interaction with target base in tRNA stretch occupies residues 98–100 (NPD). C103 functions as the Nucleophile in the catalytic mechanism. A disulfide bridge links C103 with C200. Residue G127 coordinates ATP. Residues 150–152 (KDQ) are interaction with tRNA. The active-site Cysteine persulfide intermediate is C200. The interaction with tRNA stretch occupies residues 312-313 (RY).

Belongs to the MnmA/TRMU family.

The protein localises to the cytoplasm. The catalysed reaction is S-sulfanyl-L-cysteinyl-[protein] + uridine(34) in tRNA + AH2 + ATP = 2-thiouridine(34) in tRNA + L-cysteinyl-[protein] + A + AMP + diphosphate + H(+). Catalyzes the 2-thiolation of uridine at the wobble position (U34) of tRNA, leading to the formation of s(2)U34. In Streptococcus thermophilus (strain ATCC BAA-491 / LMD-9), this protein is tRNA-specific 2-thiouridylase MnmA.